We begin with the raw amino-acid sequence, 481 residues long: Membrane-bound lytic murein transglycosylase F (481 aa).

Positions 1-21 (MKPLKLNYFFIGIITLLLALA) are cleaved as a signal peptide. Residues 22–268 (LWPSIPWRSS…RLEEKYLGHV (247 aa)) are non-LT domain. The LT domain stretch occupies residues 269 to 481 (GEFDYVDTTT…PAVPLTKVPE (213 aa)). E313 is a catalytic residue.

The protein in the N-terminal section; belongs to the bacterial solute-binding protein 3 family. It in the C-terminal section; belongs to the transglycosylase Slt family.

The protein resides in the cell outer membrane. The enzyme catalyses Exolytic cleavage of the (1-&gt;4)-beta-glycosidic linkage between N-acetylmuramic acid (MurNAc) and N-acetylglucosamine (GlcNAc) residues in peptidoglycan, from either the reducing or the non-reducing ends of the peptidoglycan chains, with concomitant formation of a 1,6-anhydrobond in the MurNAc residue.. In terms of biological role, murein-degrading enzyme that degrades murein glycan strands and insoluble, high-molecular weight murein sacculi, with the concomitant formation of a 1,6-anhydromuramoyl product. Lytic transglycosylases (LTs) play an integral role in the metabolism of the peptidoglycan (PG) sacculus. Their lytic action creates space within the PG sacculus to allow for its expansion as well as for the insertion of various structures such as secretion systems and flagella. The chain is Membrane-bound lytic murein transglycosylase F from Pectobacterium atrosepticum (strain SCRI 1043 / ATCC BAA-672) (Erwinia carotovora subsp. atroseptica).